Consider the following 199-residue polypeptide: MTNKSPHPSIILGSTSPYRAALLQKLNLNFQQAAPYFDEQITPTSLAPRDIAINFAKEKAESLREQFPDHLIIGSDQTAALNGLLLRKPGDKATAIKQLAACSGESVTFYSGLALINTRLNTTRTCVDWQTVYFRDLSREEIERYIELEKPYDCVGSFKVEGLGISLFEKIEGKDPNTLIGLPLIELITLLKKEGLRIP.

Asp76 acts as the Proton acceptor in catalysis.

This sequence belongs to the Maf family. YceF subfamily. The cofactor is a divalent metal cation.

It localises to the cytoplasm. It carries out the reaction N(7)-methyl-GTP + H2O = N(7)-methyl-GMP + diphosphate + H(+). Functionally, nucleoside triphosphate pyrophosphatase that hydrolyzes 7-methyl-GTP (m(7)GTP). May have a dual role in cell division arrest and in preventing the incorporation of modified nucleotides into cellular nucleic acids. The polypeptide is 7-methyl-GTP pyrophosphatase (Hahella chejuensis (strain KCTC 2396)).